Reading from the N-terminus, the 284-residue chain is L-ribulose-5-phosphate 3-epimerase UlaE (284 aa).

This sequence belongs to the L-ribulose-5-phosphate 3-epimerase family.

It catalyses the reaction L-ribulose 5-phosphate = L-xylulose 5-phosphate. It participates in cofactor degradation; L-ascorbate degradation; D-xylulose 5-phosphate from L-ascorbate: step 3/4. In terms of biological role, catalyzes the isomerization of L-xylulose-5-phosphate to L-ribulose-5-phosphate. Is involved in the anaerobic L-ascorbate utilization. The chain is L-ribulose-5-phosphate 3-epimerase UlaE from Salmonella heidelberg (strain SL476).